The following is a 133-amino-acid chain: Profilin (133 aa).

Belongs to the profilin family. As to quaternary structure, interacts with host TPM1. Interacts with protein A25.

The protein resides in the host cytoplasm. In terms of biological role, participates in either intracellular transport of viral proteins or intercellular spread of the virus. Cellular profilins modulate actin filament dynamics (polymerization and depolymerization) via direct binding to actin through an actin-binding domain as well as by modulation of other actin-binding proteins. In contrast to cellular homologs, the poxvirus profilins seem to bind actin only weakly. The sequence is that of Profilin (OPG171) from Variola virus (isolate Human/India/Ind3/1967) (VARV).